The primary structure comprises 97 residues: CLAVATA3/ESR (CLE)-related protein ESR2-C (97 aa).

The interval 1–97 is disordered; that stretch reads TRTDDKPGVN…IGPPPFLDRY (97 aa). Residues Pro-47 and Pro-50 each carry the hydroxyproline modification. The O-linked (Ara...) hydroxyproline glycan is linked to Pro-50.

This sequence belongs to the CLV3/ESR signal peptide family. In terms of processing, the O-glycosylation (arabinosylation) of the hydroxyproline Pro-50 enhances binding affinity of the ESR2Cp peptide for its receptor. As to expression, seed endosperm.

Its subcellular location is the secreted. It is found in the extracellular space. Extracellular signal peptide that regulates cell fate. The protein is CLAVATA3/ESR (CLE)-related protein ESR2-C of Zea mays (Maize).